A 196-amino-acid polypeptide reads, in one-letter code: Glycerol-3-phosphate acyltransferase (196 aa).

The next 6 membrane-spanning stretches (helical) occupy residues 5 to 25 (VYLL…IIFC), 53 to 73 (FSAL…VLLA), 80 to 100 (PSEI…PLFF), 107 to 127 (GVAT…AAGL), 130 to 150 (WLIV…TALI), and 153 to 173 (FYIW…CCLL).

It belongs to the PlsY family. Probably interacts with PlsX.

Its subcellular location is the cell inner membrane. It carries out the reaction an acyl phosphate + sn-glycerol 3-phosphate = a 1-acyl-sn-glycero-3-phosphate + phosphate. It participates in lipid metabolism; phospholipid metabolism. In terms of biological role, catalyzes the transfer of an acyl group from acyl-phosphate (acyl-PO(4)) to glycerol-3-phosphate (G3P) to form lysophosphatidic acid (LPA). This enzyme utilizes acyl-phosphate as fatty acyl donor, but not acyl-CoA or acyl-ACP. In Actinobacillus pleuropneumoniae serotype 7 (strain AP76), this protein is Glycerol-3-phosphate acyltransferase.